The sequence spans 50 residues: Thrombin-like enzyme BpirSP27 (50 aa).

The region spanning 1–50 (VVGGDECNINEHRSLVAIFNSTGFFCSGILLNQEWVLTASHCDSTNFQMK) is the Peptidase S1 domain. N20 carries N-linked (GlcNAc...) asparagine glycosylation. A disulfide bond links C26 and C42. H41 acts as the Charge relay system in catalysis.

The protein belongs to the peptidase S1 family. Snake venom subfamily. As to quaternary structure, monomer. Post-translationally, N-glycosylated. In terms of tissue distribution, expressed by the venom gland.

Its subcellular location is the secreted. Inhibited by serine protease inhibitors PMSF, benzamidine, leupeptin and aprotinin, as well as by copper (Cu2+) and manganese (Mn2+) ions. Not inhibited by metalloprotease inhibitors EDTA, EGTA and 1,10-phenanthroline, as well as by barium (Ba2+) and calcium ion (Ca2+). Snake venom serine protease that interferes with the hemostatic system of the prey. It preferentially degrades the Bbeta chain (FGB) of fibrinogen, with minor effects on the Aalpha chain (FGA). It presents a lower ability to degrade fibrin clots than BpirSP41. It hydrolyzes chromogenic substrates S-2238 (used for testing thrombin activity), S-2222 (factor Xa), S-2266 (glandular kallikrein and factor XIa), S-2302 (plasma kallikrein, factor XIa and XIIa), and S-2251 (plasmin). It shows a decrease in the clotting time of human plasma in the presence of increasing doses of the enzyme. Its minimum coagulant dose (MCD) is 3.5 ug. It also promotes platelet aggregation in a concentration-dependent manner in the presence or absence of calcium. It also shows 20% inhibition of the hemolytic activity promoted by the complement pathways and possess only a minor role in the induction of edema and pain in rat. In Bothrops pirajai (Piraja's lancehead), this protein is Thrombin-like enzyme BpirSP27.